An 894-amino-acid chain; its full sequence is Histone-lysine N-methyltransferase PRDM9 (894 aa).

2 disordered regions span residues 1–23 and 143–174; these read MSPE…RKPM and SGSE…LRKK. The region spanning 23–86 is the KRAB-related domain; it reads MVKDAFKDIS…RRQAIKLQVD (64 aa). Positions 143 to 164 are enriched in polar residues; the sequence is SGSEQAQKPVSPSGEASTSGQH. Zn(2+) contacts are provided by Cys-205, Cys-208, Cys-216, and His-219. The SET domain occupies 244–358; it reads PGLRIGPSGI…PGCELLVWYG (115 aa). S-adenosyl-L-methionine is bound by residues 256 to 258, Tyr-291, and 320 to 321; these read AGL and NC. 288-294 is a substrate binding site; sequence NNGYSWL. Tyr-357 contributes to the substrate binding site. Residue Lys-368 is modified to N6,N6,N6-trimethyllysine; alternate. N6-methyllysine; alternate is present on Lys-368. Residues Lys-372 and Lys-374 each carry the N6-methyllysine modification. The segment at 388 to 411 adopts a C2H2-type 1 zinc-finger fold; it reads HPCPSCCLAFSSQKFLSQHVERNH. Residues Cys-390, Cys-393, His-406, and His-411 each contribute to the Zn(2+) site. The interval 408-469 is disordered; it reads ERNHSSQNFP…SKLLNKRTWQ (62 aa). Over residues 444–461 the composition is skewed to basic and acidic residues; the sequence is PHSRNDKTKGQEIKERSK. The segment at 524 to 546 adopts a C2H2-type 2; degenerate zinc-finger fold; sequence VKYGECGQGFSVKSDVITHQRTH. 12 consecutive C2H2-type zinc fingers follow at residues 552–574, 580–602, 608–630, 636–658, 664–686, 692–714, 720–742, 748–770, 776–798, 804–826, 832–854, and 860–882; these read YVCR…QRIH, YVCR…QRTH, and YVCR…QRRH. Positions 722, 725, 738, 742, 750, 753, 766, 770, 778, 781, 794, 798, 806, 809, 822, and 826 each coordinate Zn(2+). Residues 730–820 form a DNA-binding region; that stretch reads SNKSHLLRHQ…RGFSNKSHLL (91 aa).

Belongs to the class V-like SAM-binding methyltransferase superfamily. In terms of assembly, homodimer. Interacts with EHMT2 and CDYL; interaction only takes place when PRDM9 is bound to hotspot DNA. Interacts with CXXC1; this interaction does not link PRDM9-activated recombination hotspot sites with DSB machinery and is not required for the hotspot recognition pathway. Forms a complex with EWSR1, REC8, SYCP3 and SYCP1; complex formation is dependent of phosphorylated form of REC8 and requires PRDM9 bound to hotspot DNA; EWSR1 joins PRDM9 with the chromosomal axis through REC8. Post-translationally, mono-methylated; automethylated. Tri-methylated; automethylated. Mono-methylation is predominant; automethylation is lower and slower than H3 peptide methylation and is in a highest S-adenosyl-L-methionine concentration-dependent. There are two major sites for automethylation at Lys-368 and Lys-374. Lysines can be simultaneously methylated, such as Lys-368(me3)/Lys-372(me1), Lys-368(me1)/Lys-374(me1) and Lys-368(me1)/Lys-372(me1)/Lys-374(me1). Automethylation is an intramolecular (cis) process.

It localises to the nucleus. Its subcellular location is the chromosome. It catalyses the reaction L-lysyl-[protein] + S-adenosyl-L-methionine = N(6)-methyl-L-lysyl-[protein] + S-adenosyl-L-homocysteine + H(+). It carries out the reaction N(6)-methyl-L-lysyl-[protein] + S-adenosyl-L-methionine = N(6),N(6)-dimethyl-L-lysyl-[protein] + S-adenosyl-L-homocysteine + H(+). The enzyme catalyses L-lysyl(4)-[histone H3] + 3 S-adenosyl-L-methionine = N(6),N(6),N(6)-trimethyl-L-lysyl(4)-[histone H3] + 3 S-adenosyl-L-homocysteine + 3 H(+). The catalysed reaction is L-lysyl(36)-[histone H3] + 3 S-adenosyl-L-methionine = N(6),N(6),N(6)-trimethyl-L-lysyl(36)-[histone H3] + 3 S-adenosyl-L-homocysteine + 3 H(+). It catalyses the reaction L-lysyl(9)-[histone H3] + 3 S-adenosyl-L-methionine = N(6),N(6),N(6)-trimethyl-L-lysyl(9)-[histone H3] + 3 S-adenosyl-L-homocysteine + 3 H(+). It carries out the reaction L-lysyl(20)-[histone H4] + S-adenosyl-L-methionine = N(6)-methyl-L-lysyl(20)-[histone H4] + S-adenosyl-L-homocysteine + H(+). The enzyme catalyses N(6)-methyl-L-lysyl(20)-[histone H4] + S-adenosyl-L-methionine = N(6),N(6)-dimethyl-L-lysyl(20)-[histone H4] + S-adenosyl-L-homocysteine + H(+). Inhibited by suramin with an IC(50) of 4.1 uM. In terms of biological role, histone methyltransferase that sequentially mono-, di-, and tri-methylates both 'Lys-4' (H3K4) and 'Lys-36' (H3K36) of histone H3 to produce respectively trimethylated 'Lys-4' (H3K4me3) and trimethylated 'Lys-36' (H3K36me3) histone H3 and plays a key role in meiotic prophase by determining hotspot localization thereby promoting meiotic recombination. Can also methylate all four core histones with H3 being the best substrate and the most highly modified. Is also able, on one hand, to mono and di-methylate H4K20 and on other hand to trimethylate H3K9 with the di-methylated H3K9 as the best substrate. During meiotic prophase, binds specific DNA sequences through its zinc finger domains thereby determining hotspot localization where it promotes local H3K4me3 and H3K36me3 enrichment on the same nucleosomes through its histone methyltransferase activity. Thereby promotes double-stranded breaks (DSB) formation, at this subset of PRDM9-binding sites, that initiates meiotic recombination for the proper meiotic progression. During meiotic progression hotspot-bound PRDM9 interacts with several complexes; in early leptonema binds CDYL and EHMT2 followed by EWSR1 and CXXC1 by the end of leptonema. EWSR1 joins PRDM9 with the chromosomal axis through REC8. In this way, controls the DSB repair pathway, pairing of homologous chromosomes and sex body formation. Moreover plays a central role in the transcriptional activation of genes during early meiotic prophase thanks to H3K4me3 and H3K36me3 enrichment that represents a specific tag for epigenetic transcriptional activation. In addition performs automethylation. Acetylation and phosphorylation of histone H3 attenuate or prevent histone H3 methylation. The chain is Histone-lysine N-methyltransferase PRDM9 from Homo sapiens (Human).